A 498-amino-acid chain; its full sequence is Glycerol kinase (498 aa).

Position 12 (threonine 12) interacts with ADP. Residues threonine 12, threonine 13, and serine 14 each contribute to the ATP site. Residue threonine 12 coordinates sn-glycerol 3-phosphate. Arginine 16 serves as a coordination point for ADP. Sn-glycerol 3-phosphate-binding residues include arginine 82, glutamate 83, tyrosine 134, and aspartate 243. Arginine 82, glutamate 83, tyrosine 134, aspartate 243, and glutamine 244 together coordinate glycerol. ADP contacts are provided by threonine 265 and glycine 308. 4 residues coordinate ATP: threonine 265, glycine 308, glutamine 312, and glycine 409. ADP contacts are provided by glycine 409 and asparagine 413.

This sequence belongs to the FGGY kinase family. Homotetramer and homodimer (in equilibrium).

The enzyme catalyses glycerol + ATP = sn-glycerol 3-phosphate + ADP + H(+). It participates in polyol metabolism; glycerol degradation via glycerol kinase pathway; sn-glycerol 3-phosphate from glycerol: step 1/1. Its activity is regulated as follows. Activated by phosphorylation and inhibited by fructose 1,6-bisphosphate (FBP). Functionally, key enzyme in the regulation of glycerol uptake and metabolism. Catalyzes the phosphorylation of glycerol to yield sn-glycerol 3-phosphate. This is Glycerol kinase from Clostridium botulinum (strain ATCC 19397 / Type A).